The primary structure comprises 147 residues: Large-conductance mechanosensitive channel (147 aa).

Helical transmembrane passes span 8 to 28 and 81 to 101; these read FIMK…AAFG and GIFL…FMII.

The protein belongs to the MscL family. As to quaternary structure, homopentamer.

It is found in the cell inner membrane. In terms of biological role, channel that opens in response to stretch forces in the membrane lipid bilayer. May participate in the regulation of osmotic pressure changes within the cell. The polypeptide is Large-conductance mechanosensitive channel (Trichlorobacter lovleyi (strain ATCC BAA-1151 / DSM 17278 / SZ) (Geobacter lovleyi)).